Here is a 435-residue protein sequence, read N- to C-terminus: Cell adhesion molecule 2 (435 aa).

The N-terminal stretch at Met1–Gly24 is a signal peptide. At Gln25–His367 the chain is on the extracellular side. The 93-residue stretch at Pro27–Thr119 folds into the Ig-like V-type domain. N-linked (GlcNAc...) asparagine glycosylation is found at Asn31 and Asn51. 3 disulfide bridges follow: Cys44–Cys104, Cys146–Cys203, and Cys248–Cys296. 2 consecutive Ig-like C2-type domains span residues Pro127–Gln219 and Pro227–Ile312. The N-linked (GlcNAc...) asparagine glycan is linked to Asn291. Positions Ser337–Ser351 are enriched in low complexity. The disordered stretch occupies residues Ser337–Ala360. The chain crosses the membrane as a helical span at residues Ala368–Leu388. Residues Gly389 to Ile435 are Cytoplasmic-facing. At Ser423 the chain carries Phosphoserine.

The protein belongs to the nectin family. Post-translationally, glycosylation at Asn-51 reduces adhesive binding.

It localises to the cell membrane. The protein localises to the synapse. It is found in the cell projection. Its subcellular location is the axon. Adhesion molecule that engages in homo- and heterophilic interactions with the other nectin-like family members, leading to cell aggregation. Important for synapse organization, providing regulated trans-synaptic adhesion. Preferentially binds to oligodendrocytes. The chain is Cell adhesion molecule 2 (Cadm2) from Mus musculus (Mouse).